The sequence spans 26 residues: Thioredoxin H-type (26 aa).

Belongs to the thioredoxin family. Plant H-type subfamily.

It localises to the cytoplasm. Functionally, participates in various redox reactions through the reversible oxidation of the active center dithiol to a disulfide. The H form is known to activate a number of cytosolic enzymes. This is Thioredoxin H-type from Populus euphratica (Euphrates poplar).